Here is a 249-residue protein sequence, read N- to C-terminus: Small ribosomal subunit protein uS3 (249 aa).

One can recognise a KH type-2 domain in the interval 23–94 (LNEFFTRELS…TVELYAEKVQ (72 aa)). Residues Ser32, Ser37, Ser106, and Ser141 each carry the phosphoserine modification.

This sequence belongs to the universal ribosomal protein uS3 family. In terms of assembly, component of the small ribosomal subunit (SSU). Mature yeast ribosomes consist of a small (40S) and a large (60S) subunit. The 40S small subunit contains 1 molecule of ribosomal RNA (18S rRNA) and at least 33 different proteins. The large 60S subunit contains 3 rRNA molecules (25S, 5.8S and 5S rRNA) and at least 46 different proteins.

Its subcellular location is the cytoplasm. In terms of biological role, component of the ribosome, a large ribonucleoprotein complex responsible for the synthesis of proteins in the cell. The small ribosomal subunit (SSU) binds messenger RNAs (mRNAs) and translates the encoded message by selecting cognate aminoacyl-transfer RNA (tRNA) molecules. The large subunit (LSU) contains the ribosomal catalytic site termed the peptidyl transferase center (PTC), which catalyzes the formation of peptide bonds, thereby polymerizing the amino acids delivered by tRNAs into a polypeptide chain. The nascent polypeptides leave the ribosome through a tunnel in the LSU and interact with protein factors that function in enzymatic processing, targeting, and the membrane insertion of nascent chains at the exit of the ribosomal tunnel. This is Small ribosomal subunit protein uS3 (rps3) from Schizosaccharomyces pombe (strain 972 / ATCC 24843) (Fission yeast).